A 262-amino-acid polypeptide reads, in one-letter code: MREAVIAKVSTQLSEVVGVIERHLEPTLLAVHLYGSAVDGGLKPHSDIDLLVTVTVRLDETTRRALINDLLETSASPGESEILRAVEVTIVVHDDIIPWRYPAKRELQFGEWQRNDILAGIFEPATIDIDLAILLTKAREHSVALVGPAAEELFDPVPEQDLFEALNETLTLWNSPPDWAGDERNVVLTLSRIWYSAVTGKIAPKDVAADWAMERLPAQYQPVILEARQAYLGQEDRLASRADQLEEFVHYVKGEITKVVGK.

The catalysed reaction is streptomycin + ATP = 3''-O-adenylylstreptomycin + diphosphate. It carries out the reaction spectinomycin + ATP = 9-O-adenylylspectinomycin + diphosphate. Mediates bacterial resistance to the antibiotics streptomycin and spectinomycin. This is Aminoglycoside (3'') (9) adenylyltransferase from Klebsiella pneumoniae.